Consider the following 1240-residue polypeptide: Cohesin subunit SA-3 (1240 aa).

A compositionally biased stretch (low complexity) spans 1–25; the sequence is MPTLWSPSTQHHGSSSGSESSPLQK. The disordered stretch occupies residues 1-108; sequence MPTLWSPSTQ…VSSGNGKNES (108 aa). Polar residues predominate over residues 97 to 108; the sequence is RIVSSGNGKNES. One can recognise an SCD domain in the interval 324-409; the sequence is FVHRYRDILP…NRFKDRMVSM (86 aa). Disordered regions lie at residues 1077 to 1154 and 1213 to 1240; these read AEAS…PELI and DKMLHSPSSPSEHGLDLLDTTELNMEDF. Over residues 1115–1125 the composition is skewed to polar residues; sequence GPTTPTLTSTA. Positions 1126–1141 are enriched in basic residues; sequence VKRKQSLRTVGKKQKG. S1218 is modified (phosphoserine).

Belongs to the SCC3 family. As to quaternary structure, component of the meiosis-specific cohesin complex, which also contains the SMC1 (SMC1A or SMC1B) and SMC3 heterodimer. Such complex likely contains RAD21, or the meiosis-specific related protein REC8. Interacts with CCDC79/TERB1; recruiting cohesin to telomeres to develop structural rigidity. In terms of processing, phosphorylated. Testis specific.

It localises to the nucleus. Its subcellular location is the chromosome. The protein localises to the centromere. Meiosis specific component of cohesin complex. The cohesin complex is required for the cohesion of sister chromatids after DNA replication. The cohesin complex apparently forms a large proteinaceous ring within which sister chromatids can be trapped. At anaphase, the complex is cleaved and dissociates from chromatin, allowing sister chromatids to segregate. The meiosis-specific cohesin complex probably replaces mitosis specific cohesin complex when it dissociates from chromatin during prophase I. This is Cohesin subunit SA-3 (Stag3) from Mus musculus (Mouse).